Consider the following 282-residue polypeptide: MSNKIISLGSIEIANDKPFVLFGGMNVLESRDLAMQIAETYAEVTQKLGIPYVFKASFDKANRSSVNSYRGPGMEEGLKIFEEIKSTFNLPLITDVHEVHQCAPVAEVVDVIQLPAFLARQTDLVVAMAKTGAIINVKKPQFLAPHEMRHIITKFNEAGNDEIMLCERGSSFGYNNLVVDMLGMDEMKQTGYPVIFDATHALQRPGGRSDSAGGRRAQATELARSGMALGLAGLFIEAHPDPDNAKCDGPCALPLHQLENYLTQMKAIDDLVKSFEPIDTSK.

The protein belongs to the KdsA family.

It is found in the cytoplasm. The enzyme catalyses D-arabinose 5-phosphate + phosphoenolpyruvate + H2O = 3-deoxy-alpha-D-manno-2-octulosonate-8-phosphate + phosphate. It functions in the pathway carbohydrate biosynthesis; 3-deoxy-D-manno-octulosonate biosynthesis; 3-deoxy-D-manno-octulosonate from D-ribulose 5-phosphate: step 2/3. The protein operates within bacterial outer membrane biogenesis; lipopolysaccharide biosynthesis. The polypeptide is 2-dehydro-3-deoxyphosphooctonate aldolase (Shewanella pealeana (strain ATCC 700345 / ANG-SQ1)).